The chain runs to 365 residues: Protein RecA (365 aa).

81 to 88 (GPESSGKT) is an ATP binding site.

Belongs to the RecA family.

It is found in the cytoplasm. In terms of biological role, can catalyze the hydrolysis of ATP in the presence of single-stranded DNA, the ATP-dependent uptake of single-stranded DNA by duplex DNA, and the ATP-dependent hybridization of homologous single-stranded DNAs. It interacts with LexA causing its activation and leading to its autocatalytic cleavage. This Borreliella burgdorferi (strain ATCC 35210 / DSM 4680 / CIP 102532 / B31) (Borrelia burgdorferi) protein is Protein RecA.